The primary structure comprises 589 residues: Muscarinic acetylcholine receptor M3 (589 aa).

Topologically, residues 1-66 are extracellular; it reads MTLHSNSTTS…DPLGGHTIWQ (66 aa). N-linked (GlcNAc...) asparagine glycosylation is found at Asn6, Asn15, Asn41, Asn48, and Asn52. Residues 67–90 form a helical membrane-spanning segment; sequence VVFIAFLTGFLALVTIIGNILVIV. Residues 91 to 103 are Cytoplasmic-facing; sequence AFKVNKQLKTVNN. Residues 104-129 form a helical membrane-spanning segment; it reads YFLLSLACADLIIGVISMNLFTTYII. The Extracellular segment spans residues 130 to 141; it reads MNRWALGNLACD. A disulfide bond links Cys140 and Cys220. A helical transmembrane segment spans residues 142 to 163; it reads LWLSIDYVASNASVMNLLVISF. The Cytoplasmic segment spans residues 164–183; the sequence is DRYFSITRPLTYRAKRTTKR. Residues 184-205 form a helical membrane-spanning segment; it reads AGVMIGLAWVISFVLWAPAILF. The Extracellular segment spans residues 206–228; it reads WQYFVGKRTVPPGECFIQFLSEP. A helical transmembrane segment spans residues 229–251; the sequence is TITFGTAIAAFYMPVTIMTILYW. At 252–490 the chain is on the cytoplasmic side; the sequence is RIYKETEKRT…SLIKEKKAAQ (239 aa). The short motif at 274-280 is the Basolateral sorting signal element; it reads AEAENFV. Residues 323–356 are disordered; sequence AEQMDQDHSSSDSWNNNDAAASLENSASSDEEDI. Positions 333-344 are enriched in low complexity; sequence SDSWNNNDAAAS. Ser384 bears the Phosphoserine mark. A helical membrane pass occupies residues 491 to 513; that stretch reads TLSAILLAFIITWTPYNIMVLVN. The Extracellular portion of the chain corresponds to 514-525; the sequence is TFCDSCIPKTYW. The cysteines at positions 516 and 519 are disulfide-linked. Residues 526 to 545 traverse the membrane as a helical segment; it reads NLGYWLCYINSTVNPVCYAL. At 546-589 the chain is on the cytoplasmic side; it reads CNKTFRTTFKTLLLCQCDKRKRRKQQYQQRQSVIFHKRVPEQAL.

This sequence belongs to the G-protein coupled receptor 1 family. Muscarinic acetylcholine receptor subfamily. CHRM3 sub-subfamily. In terms of assembly, homodimer; the dimers can form tetramers. Interacts with NALCN. Interacts with TMEM147.

The protein resides in the cell membrane. It is found in the postsynaptic cell membrane. Its subcellular location is the basolateral cell membrane. It localises to the endoplasmic reticulum membrane. The muscarinic acetylcholine receptor mediates various cellular responses, including inhibition of adenylate cyclase, breakdown of phosphoinositides and modulation of potassium channels through the action of G proteins. Primary transducing effect is Pi turnover. The sequence is that of Muscarinic acetylcholine receptor M3 (Chrm3) from Rattus norvegicus (Rat).